The sequence spans 481 residues: ATP synthase subunit beta, chloroplastic (481 aa).

Position 161-168 (161-168 (GGAGVGKT)) interacts with ATP.

It belongs to the ATPase alpha/beta chains family. F-type ATPases have 2 components, CF(1) - the catalytic core - and CF(0) - the membrane proton channel. CF(1) has five subunits: alpha(3), beta(3), gamma(1), delta(1), epsilon(1). CF(0) has four main subunits: a(1), b(1), b'(1) and c(9-12).

The protein resides in the plastid. Its subcellular location is the chloroplast thylakoid membrane. It catalyses the reaction ATP + H2O + 4 H(+)(in) = ADP + phosphate + 5 H(+)(out). In terms of biological role, produces ATP from ADP in the presence of a proton gradient across the membrane. The catalytic sites are hosted primarily by the beta subunits. The polypeptide is ATP synthase subunit beta, chloroplastic (Dictyota dichotoma).